The primary structure comprises 177 residues: Shikimate kinase (177 aa).

17–22 (GVGKTT) contacts ATP. Thr-21 is a Mg(2+) binding site. Residues Asp-39, Arg-63, and Gly-86 each contribute to the substrate site. Arg-125 contacts ATP. Arg-143 provides a ligand contact to substrate. An ATP-binding site is contributed by Arg-159.

The protein belongs to the shikimate kinase family. As to quaternary structure, monomer. Mg(2+) is required as a cofactor.

It localises to the cytoplasm. The catalysed reaction is shikimate + ATP = 3-phosphoshikimate + ADP + H(+). The protein operates within metabolic intermediate biosynthesis; chorismate biosynthesis; chorismate from D-erythrose 4-phosphate and phosphoenolpyruvate: step 5/7. Its function is as follows. Catalyzes the specific phosphorylation of the 3-hydroxyl group of shikimic acid using ATP as a cosubstrate. This is Shikimate kinase from Bacillus licheniformis (strain ATCC 14580 / DSM 13 / JCM 2505 / CCUG 7422 / NBRC 12200 / NCIMB 9375 / NCTC 10341 / NRRL NRS-1264 / Gibson 46).